The primary structure comprises 434 residues: V-type ATP synthase beta chain (434 aa).

Belongs to the ATPase alpha/beta chains family.

Functionally, produces ATP from ADP in the presence of a proton gradient across the membrane. The V-type beta chain is a regulatory subunit. This Borreliella afzelii (strain PKo) (Borrelia afzelii) protein is V-type ATP synthase beta chain.